Reading from the N-terminus, the 305-residue chain is UDP-3-O-acyl-N-acetylglucosamine deacetylase (305 aa).

Zn(2+) is bound by residues histidine 78, histidine 237, and aspartate 241. The active-site Proton donor is the histidine 264.

This sequence belongs to the LpxC family. The cofactor is Zn(2+).

It carries out the reaction a UDP-3-O-[(3R)-3-hydroxyacyl]-N-acetyl-alpha-D-glucosamine + H2O = a UDP-3-O-[(3R)-3-hydroxyacyl]-alpha-D-glucosamine + acetate. Its pathway is glycolipid biosynthesis; lipid IV(A) biosynthesis; lipid IV(A) from (3R)-3-hydroxytetradecanoyl-[acyl-carrier-protein] and UDP-N-acetyl-alpha-D-glucosamine: step 2/6. Catalyzes the hydrolysis of UDP-3-O-myristoyl-N-acetylglucosamine to form UDP-3-O-myristoylglucosamine and acetate, the committed step in lipid A biosynthesis. The protein is UDP-3-O-acyl-N-acetylglucosamine deacetylase of Burkholderia thailandensis (strain ATCC 700388 / DSM 13276 / CCUG 48851 / CIP 106301 / E264).